The chain runs to 131 residues: MIEVAEIIAREIRRGKIVEIGVGFYLEVAKRLRESGIDILVVDINEKAINYARKQGIKGVVDDIFNPTLGIYKDAKAIYSIRPAPEMMKPLLDLARKLKIPLYIVPLTGDRTPNGMKLINYKGIPIYKWEP.

It belongs to the UPF0146 family.

The chain is UPF0146 protein PH0209 from Pyrococcus horikoshii (strain ATCC 700860 / DSM 12428 / JCM 9974 / NBRC 100139 / OT-3).